Here is a 426-residue protein sequence, read N- to C-terminus: MSRQAWIETSALIECISEYGTKCSFDTFQGLTINDISTLSNLMNQISVASVGFLNDPRTPLQAMSCEFVNFISTADRHAYMLQKNWFDSDVAPNVTTDNFIATYIKPRFSRTVSDVLRQVNNFALQPMENPKLISRQLGVLKAYDIPYSTPINPMDVARSSANVVGNVSQRRALSTPLIQGAQNVTFIVSESDKIIFGTRSLNPIAPGNFQINVPPWYSDLNVVDARIYFTNSFLGCTIQNVQVNAVNGNDPVATITVPTDNNPFIVDSDSVVSLSLSGGAINVTTAVNLTGYAIAIEGKFNMQMNASPSYYTLSSLTIQTSVIDDFGLSAFLEPFRIRLRASGQTEIFSQSMNTLTENLIRQYMPANQAVNIAFVSPWYRFSERARTILTFNQPLLPFASRKLIIRHLWVIMSFIAVFGRYYTVN.

This sequence belongs to the phytoreovirus outer capsid protein P8 family. As to quaternary structure, homotrimer. Homomultimer.

Its subcellular location is the virion. The protein resides in the host cytoplasm. Capsid protein which self-assembles to form the outer icosahedral capsid with a T=13 symmetry, about 70 nm in diameter and consisting of 260 P8 trimers. Mediates the secretion of assembled virus-like particles from host insect cells. This Nephotettix cincticeps (Green rice leafhopper) protein is Outer capsid protein P8.